We begin with the raw amino-acid sequence, 53 residues long: Collagen alpha-1(I) chain (53 aa).

Residues 1-53 are disordered; the sequence is SYGYBZKSAGVSVPGPMGPSGPRGLPGPPGAPGPZGFZGPPGZPGZPGSSGPM. Position 7 is an allysine (Lys-7). Ser-8 is subject to Phosphoserine. Residues 10–23 are compositionally biased toward low complexity; that stretch reads GVSVPGPMGPSGPR. 6 positions are modified to 4-hydroxyproline: Pro-26, Pro-29, Pro-32, Pro-41, Pro-44, and Pro-47. A compositionally biased stretch (low complexity) spans 34 to 53; that stretch reads PZGFZGPPGZPGZPGSSGPM.

It belongs to the fibrillar collagen family. Trimers of one alpha 2(I) and two alpha 1(I) chains. Interacts with MRC2. Interacts with TRAM2. Interacts with MFAP4 in a Ca (2+)-dependent manner. Contains mostly 4-hydroxyproline. Proline residues at the third position of the tripeptide repeating unit (G-X-Y) are hydroxylated in some or all of the chains. In terms of processing, contains 3-hydroxyproline at a few sites. This modification occurs on the first proline residue in the sequence motif Gly-Pro-Hyp, where Hyp is 4-hydroxyproline. Post-translationally, lysine residues at the third position of the tripeptide repeating unit (G-X-Y) are 5-hydroxylated in some or all of the chains. O-glycosylated on hydroxylated lysine residues. The O-linked glycan consists of a Glc-Gal disaccharide. Forms the fibrils of tendon, ligaments and bones. In bones the fibrils are mineralized with calcium hydroxyapatite.

The protein resides in the secreted. Its subcellular location is the extracellular space. It localises to the extracellular matrix. Its function is as follows. Type I collagen is a member of group I collagen (fibrillar forming collagen). This Oryctolagus cuniculus (Rabbit) protein is Collagen alpha-1(I) chain (COL1A1).